The primary structure comprises 261 residues: 1-(5-phosphoribosyl)-5-[(5-phosphoribosylamino)methylideneamino] imidazole-4-carboxamide isomerase (261 aa).

D15 acts as the Proton acceptor in catalysis. D136 functions as the Proton donor in the catalytic mechanism.

The protein belongs to the HisA/HisF family.

It localises to the cytoplasm. The enzyme catalyses 1-(5-phospho-beta-D-ribosyl)-5-[(5-phospho-beta-D-ribosylamino)methylideneamino]imidazole-4-carboxamide = 5-[(5-phospho-1-deoxy-D-ribulos-1-ylimino)methylamino]-1-(5-phospho-beta-D-ribosyl)imidazole-4-carboxamide. Its pathway is amino-acid biosynthesis; L-histidine biosynthesis; L-histidine from 5-phospho-alpha-D-ribose 1-diphosphate: step 4/9. This is 1-(5-phosphoribosyl)-5-[(5-phosphoribosylamino)methylideneamino] imidazole-4-carboxamide isomerase from Synechococcus sp. (strain JA-2-3B'a(2-13)) (Cyanobacteria bacterium Yellowstone B-Prime).